Consider the following 149-residue polypeptide: Protein cornichon homolog 2 (149 aa).

Helical transmembrane passes span 3 to 23 (IELI…GLTA), 59 to 79 (ALCA…MAPV), and 117 to 137 (YFSL…TLFI).

Belongs to the cornichon family.

It is found in the endoplasmic reticulum membrane. Its subcellular location is the golgi apparatus membrane. Functionally, acts as a cargo receptor necessary for the transportation of secretory proteins from the endoplasmic reticulum (ER) in COPII-coated vesicles targeted to the Golgi apparatus. This Oryza sativa subsp. japonica (Rice) protein is Protein cornichon homolog 2.